Here is a 159-residue protein sequence, read N- to C-terminus: Heat shock protein beta-9 (159 aa).

Residues leucine 36–leucine 147 enclose the sHSP domain.

The protein belongs to the small heat shock protein (HSP20) family. In terms of tissue distribution, testis specific.

The protein localises to the cytoplasm. It is found in the nucleus. This chain is Heat shock protein beta-9 (HSPB9), found in Homo sapiens (Human).